Consider the following 483-residue polypeptide: Regulatory protein ViaA (483 aa).

It belongs to the ViaA family. As to quaternary structure, homodimer. Interacts with RavA.

The protein resides in the cytoplasm. Functionally, component of the RavA-ViaA chaperone complex, which may act on the membrane to optimize the function of some of the respiratory chains. ViaA stimulates the ATPase activity of RavA. In Salmonella agona (strain SL483), this protein is Regulatory protein ViaA.